The sequence spans 1081 residues: Teashirt homolog 3 (1081 aa).

3 disordered regions span residues 25 to 104 (LVED…EVQV), 141 to 161 (PSSENNGGSSSSSSSSSSSCG), and 238 to 257 (HYRDDNHETDNNNPKRWSKP). Acidic residues predominate over residues 26-37 (VEDDVEPEEQAA). Over residues 68-87 (SSHEMDSESHISETSDRMAD) the composition is skewed to basic and acidic residues. 2 C2H2-type zinc fingers span residues 214-238 (FRCKDCSAAYDTLVELTVHMNETGH) and 275-299 (LKCMYCGHSFESLQDLSVHMIKTKH). Over residues 238–247 (HYRDDNHETD) the composition is skewed to basic and acidic residues. Residues 325-346 (SLELELPSSPDSTGGTPKATLS) form a disordered region. The segment at 387–410 (KCMECGSSHDTLQELTAHMMVTGH) adopts a C2H2-type 3; atypical zinc-finger fold. A compositionally biased stretch (basic and acidic residues) spans 474–491 (VDKEKAVPDEKPKEREKP). 4 disordered regions span residues 474–499 (VDKEKAVPDEKPKEREKPSEEEEKYD), 626–699 (EKMK…KPLS), 792–824 (LTKGKSDKGCSLGSGLLSPTSTSPATSSSTVTT), and 855–897 (TESH…RQSN). Residues 606 to 630 (NFHAMEELVKKVTEKVAKVEEKMKE) adopt a coiled-coil conformation. Over residues 660 to 670 (SDGSFKSQENS) the composition is skewed to polar residues. Residue Ser-682 is modified to Phosphoserine. 2 stretches are compositionally biased toward low complexity: residues 800–824 (GCSLGSGLLSPTSTSPATSSSTVTT) and 856–869 (ESHTSKSSTPSSIS). Positions 891 to 961 (RKGRQSNWNP…NVKYQLRRTG (71 aa)) form a DNA-binding region, homeobox; atypical. 2 consecutive C2H2-type zinc fingers follow at residues 976 to 998 (FFCNDCASQIRTPSTYISHLESH) and 1041 to 1064 (YQCKLCNRTFASKHAVKLHLSKTH).

It belongs to the teashirt C2H2-type zinc-finger protein family. As to quaternary structure, interacts (via N-terminus) with HDAC1 and HDAC2; the interaction is direct. Found in a trimeric complex with APBB1 and HDAC1; the interaction between HDAC1 and APBB1 is mediated by TSHZ3. Interacts (via homeobox domain) with APBB1 (via PID domain 1). Expressed in corticostriatal neurons.

It localises to the nucleus. The protein resides in the cell projection. The protein localises to the growth cone. Transcriptional regulator involved in developmental processes. Functions in association with APBB1, SET and HDAC factors as a transcriptional repressor, that inhibits the expression of CASP4. TSHZ3-mediated transcription repression involves the recruitment of histone deacetylases HDAC1 and HDAC2. Associates with chromatin in a region surrounding the CASP4 transcriptional start site(s). Regulates the development of neurons involved in both respiratory rhythm and airflow control. Promotes maintenance of nucleus ambiguus (nA) motoneurons, which govern upper airway function, and establishes a respiratory rhythm generator (RRG) activity compatible with survival at birth. Involved in the differentiation of the proximal uretic smooth muscle cells during developmental processes. Involved in the up-regulation of myocardin, that directs the expression of smooth muscle cells in the proximal ureter. Involved in the modulation of glutamatergic synaptic transmission and long-term synaptic potentiation. The protein is Teashirt homolog 3 (Tshz3) of Mus musculus (Mouse).